A 120-amino-acid chain; its full sequence is Prefoldin subunit beta (120 aa).

The protein belongs to the prefoldin subunit beta family. In terms of assembly, heterohexamer of two alpha and four beta subunits.

It localises to the cytoplasm. Its function is as follows. Molecular chaperone capable of stabilizing a range of proteins. Seems to fulfill an ATP-independent, HSP70-like function in archaeal de novo protein folding. The sequence is that of Prefoldin subunit beta (pfdB) from Methanopyrus kandleri (strain AV19 / DSM 6324 / JCM 9639 / NBRC 100938).